We begin with the raw amino-acid sequence, 258 residues long: GPI alpha-1,4-mannosyltransferase I, stabilizing subunit (258 aa).

A signal peptide spans 1 to 21 (MAARVAAVRAAAWLLLGAATG). The Lumenal segment spans residues 22-230 (LTRGPAAAFT…PVGLTVHTSL (209 aa)). An N-linked (GlcNAc...) asparagine glycan is attached at N103. A helical transmembrane segment spans residues 231 to 251 (VCSVTLLITILCSTLILVAVF). The Cytoplasmic segment spans residues 252–258 (KYGHFSL).

This sequence belongs to the PIGX family. Part of the glycosylphosphatidylinositol-mannosyltransferase I complex that is composed of PIGM and PIGX. Interacts with PIGM; PIGX stabilizes PIGM.

It is found in the endoplasmic reticulum membrane. It functions in the pathway glycolipid biosynthesis; glycosylphosphatidylinositol-anchor biosynthesis. Its function is as follows. Stabilizing subunit of the glycosylphosphatidylinositol-mannosyltransferase I complex which catalyzes the transfer of the first mannose, via an alpha-1,4 bond from a dolichol-phosphate-mannose (Dol-P-Man) to the glucosaminyl acyl phosphatidylinositol (GlcN-(acyl)PI) intermediate to generate alpha-D-Man-(1-&gt;4)-alpha-D-GlcN-(1-&gt;6)-(1-radyl,2-acyl-sn-glycero-3-phospho)-2-acyl-inositol and participates in the sixth step of the glycosylphosphatidylinositol-anchor biosynthesis. Probably acts by stabilizing the mannosyltransferase PIGM. The polypeptide is GPI alpha-1,4-mannosyltransferase I, stabilizing subunit (Homo sapiens (Human)).